Consider the following 623-residue polypeptide: Actin-related protein 8 (623 aa).

Basic and acidic residues predominate over residues 1-24; that stretch reads MTQTDRDAENGRDREKDREKEQQR. The segment at 1 to 29 is disordered; that stretch reads MTQTDRDAENGRDREKDREKEQQRGVKRP. 283–286 lines the ATP pocket; the sequence is DVGD. The segment covering 428 to 438 has biased composition (low complexity); that stretch reads TQSKQDQSSKA. A disordered region spans residues 428-458; sequence TQSKQDQSSKASADRKSFPKPSSFEGESSVC.

Belongs to the actin family. ARP8 subfamily. In terms of assembly, component of the chromatin remodeling INO80 complex; specifically part of a complex module associated with the DBINO domain of INO80. Exists as monomers and dimers, but the dimer is most probably the biologically relevant form required for stable interactions with histones that exploits the twofold symmetry of the nucleosome core.

It localises to the nucleus. The protein localises to the chromosome. Functionally, plays an important role in the functional organization of mitotic chromosomes. Exhibits low basal ATPase activity, and unable to polymerize. Proposed core component of the chromatin remodeling INO80 complex which is involved in transcriptional regulation, DNA replication and probably DNA repair. Required for the recruitment of INO80 (and probably the INO80 complex) to sites of DNA damage Strongly prefer nucleosomes and H3-H4 tetramers over H2A-H2B dimers, suggesting it may act as a nucleosome recognition module within the complex. This chain is Actin-related protein 8 (actr8), found in Danio rerio (Zebrafish).